Here is a 223-residue protein sequence, read N- to C-terminus: Cuticular glutathione peroxidase (223 aa).

Positions 1–19 (MSAQLLILSHVVLLQLIVA) are cleaved as a signal peptide. A glycan (N-linked (GlcNAc...) asparagine) is linked at N39. The active site involves C74. N92 carries N-linked (GlcNAc...) asparagine glycosylation.

This sequence belongs to the glutathione peroxidase family. As to quaternary structure, homotetramer.

The protein localises to the secreted. It catalyses the reaction 2 glutathione + H2O2 = glutathione disulfide + 2 H2O. Could inhibit the oxidative burst of leukocytes and neutralize the secondary products of lipid peroxidation, thus providing the resistance of these parasites to immune effector mechanisms and their persistence in the mammalian host. It may also be involved in the formation of cross-linking residues such as dityrosine, trityrosine and isotrityrosine identified in cuticular collagen. Highly cross-linked external cortex may also serve to protect the parasite from immune attack. The polypeptide is Cuticular glutathione peroxidase (Wuchereria bancrofti).